A 254-amino-acid chain; its full sequence is Transcription factor CAULIFLOWER (254 aa).

Residues 1-61 (MGRGRVEMKR…GKLFEYSSES (61 aa)) form the MADS-box domain. The 91-residue stretch at 90–180 (QTNWSMEYSR…TKQIKERESI (91 aa)) folds into the K-box domain. A compositionally biased stretch (polar residues) spans 182-191 (RTHQNQSEQQ). A disordered region spans residues 182–205 (RTHQNQSEQQNRSHHVAPQPQPQL).

In terms of assembly, homodimer capable of binding to CArG-box sequences.

The protein localises to the nucleus. Probable transcription factor that promotes early floral meristem identity in synergy with APETALA1, FRUITFULL and LEAFY. Is required subsequently for the transition of an inflorescence meristem into a floral meristem. Seems to be partially redundant to the function of APETALA1. The polypeptide is Transcription factor CAULIFLOWER (CAL) (Brassica rapa subsp. pekinensis (Chinese cabbage)).